We begin with the raw amino-acid sequence, 457 residues long: tRNA-2-methylthio-N(6)-dimethylallyladenosine synthase (457 aa).

Residues 19-134 form the MTTase N-terminal domain; the sequence is RKLFIETYGC…LPNLVGAVEH (116 aa). The [4Fe-4S] cluster site is built by C28, C64, C98, C172, C176, and C179. A Radical SAM core domain is found at 158 to 390; the sequence is PGVHISGFVS…IDLQNKLSEE (233 aa). The region spanning 393–456 is the TRAM domain; the sequence is LRDIGKTFEV…SATLFGEPVE (64 aa).

Belongs to the methylthiotransferase family. MiaB subfamily. In terms of assembly, monomer. It depends on [4Fe-4S] cluster as a cofactor.

The protein localises to the cytoplasm. The catalysed reaction is N(6)-dimethylallyladenosine(37) in tRNA + (sulfur carrier)-SH + AH2 + 2 S-adenosyl-L-methionine = 2-methylsulfanyl-N(6)-dimethylallyladenosine(37) in tRNA + (sulfur carrier)-H + 5'-deoxyadenosine + L-methionine + A + S-adenosyl-L-homocysteine + 2 H(+). Its function is as follows. Catalyzes the methylthiolation of N6-(dimethylallyl)adenosine (i(6)A), leading to the formation of 2-methylthio-N6-(dimethylallyl)adenosine (ms(2)i(6)A) at position 37 in tRNAs that read codons beginning with uridine. The sequence is that of tRNA-2-methylthio-N(6)-dimethylallyladenosine synthase from Parabacteroides distasonis (strain ATCC 8503 / DSM 20701 / CIP 104284 / JCM 5825 / NCTC 11152).